Consider the following 90-residue polypeptide: MARMVKCIKLGREAEGLDFPPYPGPLGKRLWEEVSKEAWADWMKQQTMLVNENRLNLADARARQYLARQMEKHFFGDGADAVQGYVPPSA.

The protein belongs to the Fe(2+)-trafficking protein family.

Its function is as follows. Could be a mediator in iron transactions between iron acquisition and iron-requiring processes, such as synthesis and/or repair of Fe-S clusters in biosynthetic enzymes. In Polaromonas sp. (strain JS666 / ATCC BAA-500), this protein is Probable Fe(2+)-trafficking protein.